The chain runs to 149 residues: D-aminoacyl-tRNA deacylase (149 aa).

The short motif at 139 to 140 (GP) is the Gly-cisPro motif, important for rejection of L-amino acids element.

The protein belongs to the DTD family. As to quaternary structure, homodimer.

Its subcellular location is the cytoplasm. The enzyme catalyses glycyl-tRNA(Ala) + H2O = tRNA(Ala) + glycine + H(+). It carries out the reaction a D-aminoacyl-tRNA + H2O = a tRNA + a D-alpha-amino acid + H(+). In terms of biological role, an aminoacyl-tRNA editing enzyme that deacylates mischarged D-aminoacyl-tRNAs. Also deacylates mischarged glycyl-tRNA(Ala), protecting cells against glycine mischarging by AlaRS. Acts via tRNA-based rather than protein-based catalysis; rejects L-amino acids rather than detecting D-amino acids in the active site. By recycling D-aminoacyl-tRNA to D-amino acids and free tRNA molecules, this enzyme counteracts the toxicity associated with the formation of D-aminoacyl-tRNA entities in vivo and helps enforce protein L-homochirality. This is D-aminoacyl-tRNA deacylase (DTD1) from Candida glabrata (strain ATCC 2001 / BCRC 20586 / JCM 3761 / NBRC 0622 / NRRL Y-65 / CBS 138) (Yeast).